The chain runs to 251 residues: Pyrroloquinoline-quinone synthase (251 aa).

It belongs to the PqqC family.

It carries out the reaction 6-(2-amino-2-carboxyethyl)-7,8-dioxo-1,2,3,4,7,8-hexahydroquinoline-2,4-dicarboxylate + 3 O2 = pyrroloquinoline quinone + 2 H2O2 + 2 H2O + H(+). The protein operates within cofactor biosynthesis; pyrroloquinoline quinone biosynthesis. Functionally, ring cyclization and eight-electron oxidation of 3a-(2-amino-2-carboxyethyl)-4,5-dioxo-4,5,6,7,8,9-hexahydroquinoline-7,9-dicarboxylic-acid to PQQ. The sequence is that of Pyrroloquinoline-quinone synthase from Pseudomonas putida (strain ATCC 47054 / DSM 6125 / CFBP 8728 / NCIMB 11950 / KT2440).